Reading from the N-terminus, the 184-residue chain is Oocyte-secreted protein 4A (184 aa).

Positions 1 to 19 (MKISCVLGKLLMLFELIHG) are cleaved as a signal peptide. N128 carries N-linked (GlcNAc...) asparagine glycosylation.

The protein belongs to the PLAC1 family.

It is found in the secreted. This chain is Oocyte-secreted protein 4A, found in Homo sapiens (Human).